The chain runs to 204 residues: N-(5'-phosphoribosyl)anthranilate isomerase (204 aa).

This sequence belongs to the TrpF family.

It carries out the reaction N-(5-phospho-beta-D-ribosyl)anthranilate = 1-(2-carboxyphenylamino)-1-deoxy-D-ribulose 5-phosphate. Its pathway is amino-acid biosynthesis; L-tryptophan biosynthesis; L-tryptophan from chorismate: step 3/5. This is N-(5'-phosphoribosyl)anthranilate isomerase from Desulforudis audaxviator (strain MP104C).